Consider the following 364-residue polypeptide: Chorismate synthase (364 aa).

The tract at residues 41–60 is disordered; that stretch reads MQHDLDRRRPGTSRYTTARR. NADP(+) is bound by residues R48 and R54. FMN is bound by residues 125 to 127, 238 to 239, G278, 293 to 297, and R319; these read RSS, NA, and KPTSS.

Belongs to the chorismate synthase family. Homotetramer. Requires FMNH2 as cofactor.

The catalysed reaction is 5-O-(1-carboxyvinyl)-3-phosphoshikimate = chorismate + phosphate. Its pathway is metabolic intermediate biosynthesis; chorismate biosynthesis; chorismate from D-erythrose 4-phosphate and phosphoenolpyruvate: step 7/7. In terms of biological role, catalyzes the anti-1,4-elimination of the C-3 phosphate and the C-6 proR hydrogen from 5-enolpyruvylshikimate-3-phosphate (EPSP) to yield chorismate, which is the branch point compound that serves as the starting substrate for the three terminal pathways of aromatic amino acid biosynthesis. This reaction introduces a second double bond into the aromatic ring system. The polypeptide is Chorismate synthase (Shewanella baltica (strain OS223)).